A 383-amino-acid polypeptide reads, in one-letter code: ATP phosphoribosyltransferase regulatory subunit (383 aa).

The protein belongs to the class-II aminoacyl-tRNA synthetase family. HisZ subfamily. In terms of assembly, heteromultimer composed of HisG and HisZ subunits.

Its subcellular location is the cytoplasm. The protein operates within amino-acid biosynthesis; L-histidine biosynthesis; L-histidine from 5-phospho-alpha-D-ribose 1-diphosphate: step 1/9. In terms of biological role, required for the first step of histidine biosynthesis. May allow the feedback regulation of ATP phosphoribosyltransferase activity by histidine. The protein is ATP phosphoribosyltransferase regulatory subunit of Neisseria meningitidis serogroup C (strain 053442).